The chain runs to 254 residues: Alcohol dehydrogenase (254 aa).

Phenylalanine 10 to leucine 33 is a binding site for NAD(+). Serine 138 is a binding site for substrate. Tyrosine 151 functions as the Proton acceptor in the catalytic mechanism.

It belongs to the short-chain dehydrogenases/reductases (SDR) family. As to quaternary structure, homodimer.

The catalysed reaction is a primary alcohol + NAD(+) = an aldehyde + NADH + H(+). The enzyme catalyses a secondary alcohol + NAD(+) = a ketone + NADH + H(+). The polypeptide is Alcohol dehydrogenase (Adh) (Drosophila grimshawi (Hawaiian fruit fly)).